Consider the following 256-residue polypeptide: MLRIADKTFDSHLFTGTGKFASSQLMVEAIRASGSQLVTLAMKRVDLRQHNDAILDPLIAAGVTLLPNTSGAKTAEEAIFAAHLAREALGTNWLKLEIHPDARWLLPDPIETLKAAETLVQQGFVVLPYCGADPVLCKRLEEVGCAAVMPLGAPIGSNQGLETRAMLEIIIQQATVPVVVDAGIGVPSHAAQALEMGADAVLVNTAIAVADDPVNMAKAFRLAVDAGLLARQSGPGSRSHFAHATSPLTGFLEASA.

Residue Lys95 is the Schiff-base intermediate with DXP of the active site. 1-deoxy-D-xylulose 5-phosphate is bound by residues Gly156, 182–183, and 204–205; these read AG and NT.

Belongs to the ThiG family. In terms of assembly, homotetramer. Forms heterodimers with either ThiH or ThiS.

Its subcellular location is the cytoplasm. It catalyses the reaction [ThiS sulfur-carrier protein]-C-terminal-Gly-aminoethanethioate + 2-iminoacetate + 1-deoxy-D-xylulose 5-phosphate = [ThiS sulfur-carrier protein]-C-terminal Gly-Gly + 2-[(2R,5Z)-2-carboxy-4-methylthiazol-5(2H)-ylidene]ethyl phosphate + 2 H2O + H(+). Its pathway is cofactor biosynthesis; thiamine diphosphate biosynthesis. Functionally, catalyzes the rearrangement of 1-deoxy-D-xylulose 5-phosphate (DXP) to produce the thiazole phosphate moiety of thiamine. Sulfur is provided by the thiocarboxylate moiety of the carrier protein ThiS. In vitro, sulfur can be provided by H(2)S. This chain is Thiazole synthase, found in Escherichia fergusonii (strain ATCC 35469 / DSM 13698 / CCUG 18766 / IAM 14443 / JCM 21226 / LMG 7866 / NBRC 102419 / NCTC 12128 / CDC 0568-73).